Consider the following 876-residue polypeptide: Alanine--tRNA ligase (876 aa).

The interval serine 2–tyrosine 461 is catalytic. The residue at position 74 (lysine 74) is an N6-acetyllysine. Residues aspartate 553–alanine 705 are editing. Positions 564, 568, 666, and 670 each coordinate Zn(2+). The important for oligomerization stretch occupies residues threonine 699–valine 808. Residues isoleucine 766–leucine 875 form a C-Ala domain region.

It belongs to the class-II aminoacyl-tRNA synthetase family. Homotetramer. Zn(2+) is required as a cofactor.

The protein resides in the cytoplasm. It carries out the reaction tRNA(Ala) + L-alanine + ATP = L-alanyl-tRNA(Ala) + AMP + diphosphate. The catalysed reaction is (S)-lactate + ATP + H(+) = (S)-lactoyl-AMP + diphosphate. It catalyses the reaction (S)-lactoyl-AMP + L-lysyl-[protein] = N(6)-[(S)-lactoyl]-L-lysyl-[protein] + AMP + 2 H(+). Its activity is regulated as follows. Acetylation at Lys-74 decreases the alanylation activity for tRNA(Ala); a protein that is fully acetylated is inactive in vitro. In terms of biological role, catalyzes the attachment of L-alanine to tRNA(Ala) in a two-step reaction: L-alanine is first activated by ATP to form Ala-AMP and then transferred to the acceptor end of tRNA(Ala). AlaRS also incorrectly activates the sterically smaller amino acid glycine as well as the sterically larger amino acid L-serine; generates 2-fold more mischarged Gly than Ser. These mischarged amino acids occur because the of inherent physicochemical limitations on discrimination between closely related amino acids (Ala, Gly and Ser) in the charging step. In presence of high levels of lactate, also acts as a protein lactyltransferase that mediates lactylation of lysine residues in target proteins. Functionally, edits mischarged Ser-tRNA(Ala) and Gly-tRNA(Ala) but not incorrectly charged Ser-tRNA(Thr). Dtd edits Gly-tRNA(Ala) 4-fold better than does AlaRS. Attaches Ala to transfer-messenger RNA (tmRNA, also known as 10Sa RNA, the product of the ssrA gene). tmRNA plays a major role in rescue of stalled ribosomes via trans-translation. In Escherichia coli (strain K12), this protein is Alanine--tRNA ligase (alaS).